A 266-amino-acid polypeptide reads, in one-letter code: Undecaprenyl-diphosphatase (266 aa).

The next 8 membrane-spanning stretches (helical) occupy residues 1 to 21 (MDTF…FLPI), 39 to 59 (QGLS…VMYF), 87 to 107 (WWII…KGFI), 111 to 131 (LRNI…LWWA), 144 to 164 (VGWK…IPGT), 183 to 203 (AAAR…AILV), 218 to 238 (ALGL…HYFL), and 246 to 266 (MTPF…FIFL).

Belongs to the UppP family.

The protein resides in the cell inner membrane. The enzyme catalyses di-trans,octa-cis-undecaprenyl diphosphate + H2O = di-trans,octa-cis-undecaprenyl phosphate + phosphate + H(+). In terms of biological role, catalyzes the dephosphorylation of undecaprenyl diphosphate (UPP). Confers resistance to bacitracin. This chain is Undecaprenyl-diphosphatase, found in Shewanella piezotolerans (strain WP3 / JCM 13877).